The primary structure comprises 52 residues: Eukaryotic translation initiation factor 5A (52 aa).

K42 is subject to Hypusine.

This sequence belongs to the eIF-5A family. In terms of processing, lys-42 undergoes hypusination, a unique post-translational modification that consists in the addition of a butylamino group from spermidine to lysine side chain, leading to the formation of the unusual amino acid hypusine. eIF-5As are the only known proteins to undergo this modification, which is essential for their function.

The protein resides in the cytoplasm. Translation factor that promotes translation elongation and termination, particularly upon ribosome stalling at specific amino acid sequence contexts. Binds between the exit (E) and peptidyl (P) site of the ribosome and promotes rescue of stalled ribosome: specifically required for efficient translation of polyproline-containing peptides as well as other motifs that stall the ribosome. Acts as a ribosome quality control (RQC) cofactor by joining the RQC complex to facilitate peptidyl transfer during CAT tailing step. This is Eukaryotic translation initiation factor 5A from Schistosoma mansoni (Blood fluke).